Reading from the N-terminus, the 607-residue chain is ENTH domain-containing protein 1 (607 aa).

The ENTH domain maps to 9 to 141 (NFVKNYSDAE…MDEPLLCKER (133 aa)). A coiled-coil region spans residues 543–574 (EAKNSISVLLREVKRAIARLHEDLSTVIQELN).

In Homo sapiens (Human), this protein is ENTH domain-containing protein 1 (ENTHD1).